A 134-amino-acid polypeptide reads, in one-letter code: Small ribosomal subunit protein bS6 (134 aa).

The protein belongs to the bacterial ribosomal protein bS6 family.

Binds together with bS18 to 16S ribosomal RNA. The protein is Small ribosomal subunit protein bS6 of Pelodictyon phaeoclathratiforme (strain DSM 5477 / BU-1).